Consider the following 728-residue polypeptide: Meiotic sister-chromatid recombination protein 3 (728 aa).

Disordered stretches follow at residues glutamine 33–glutamine 171, asparagine 236–glutamate 261, proline 300–alanine 335, serine 363–asparagine 403, serine 422–glycine 454, valine 495–leucine 514, and tyrosine 561–arginine 728. Over residues serine 35–serine 46 the composition is skewed to low complexity. Over residues aspartate 48–leucine 58 the composition is skewed to polar residues. Serine 57 and serine 64 each carry phosphoserine. Positions serine 80–alanine 93 are enriched in low complexity. 3 stretches are compositionally biased toward polar residues: residues glutamine 95–glutamine 106, tyrosine 118–alanine 132, and lysine 140–glutamine 171. Phosphoserine occurs at positions 127, 151, and 155. Positions histidine 251–glutamate 261 are enriched in basic and acidic residues. Residues isoleucine 309–proline 326 show a composition bias toward basic residues. Phosphoserine is present on serine 363. Polar residues-rich tracts occupy residues serine 363–asparagine 373 and threonine 385–asparagine 403. Residues glutamate 590–asparagine 634 are compositionally biased toward polar residues. Positions valine 635 to threonine 646 are enriched in low complexity. Phosphothreonine is present on threonine 646. Composition is skewed to polar residues over residues asparagine 654–glutamine 668, aspartate 675–leucine 684, and methionine 691–proline 708. At serine 660 the chain carries Phosphoserine. Residues lysine 711–arginine 728 show a composition bias toward basic residues.

Its subcellular location is the cell membrane. In terms of biological role, may be involved in the control of meiotic sister-chromatid recombination. This chain is Meiotic sister-chromatid recombination protein 3 (MSC3), found in Saccharomyces cerevisiae (strain ATCC 204508 / S288c) (Baker's yeast).